The sequence spans 65 residues: Myotoxin-1 (65 aa).

A signal peptide spans 1 to 22 (MKILYLLFAFLFLAFLSEPGNA). Intrachain disulfides connect C26-C58, C33-C52, and C40-C59.

The protein belongs to the crotamine-myotoxin family. Monomer. In terms of tissue distribution, expressed by the venom gland.

It is found in the secreted. Functionally, cationic peptide that possesses multiple functions. It acts as a cell-penetrating peptide (CPP), and as a potent voltage-gated potassium channel (Kv) inhibitor. It exhibits antimicrobial activities, hind limb paralysis, and severe muscle necrosis by a non-enzymatic mechanism. This chain is Myotoxin-1, found in Crotalus durissus terrificus (South American rattlesnake).